A 591-amino-acid chain; its full sequence is L-fucose isomerase (591 aa).

Catalysis depends on proton acceptor residues E337 and D361. E337, D361, and H528 together coordinate Mn(2+).

This sequence belongs to the L-fucose isomerase family. As to quaternary structure, homohexamer. Mn(2+) is required as a cofactor.

The protein localises to the cytoplasm. The catalysed reaction is L-fucose = L-fuculose. The protein operates within carbohydrate degradation; L-fucose degradation; L-lactaldehyde and glycerone phosphate from L-fucose: step 1/3. Its function is as follows. Converts the aldose L-fucose into the corresponding ketose L-fuculose. This chain is L-fucose isomerase, found in Escherichia coli O6:K15:H31 (strain 536 / UPEC).